A 308-amino-acid chain; its full sequence is Glucan 1,3-beta-glucosidase ARB_02797 (308 aa).

The N-terminal stretch at 1–20 (MRFSTALSLALAVSPAAVFA) is a signal peptide. Catalysis depends on glutamate 120, which acts as the Proton donor. Asparagine 126 is a glycosylation site (N-linked (GlcNAc...) asparagine). Glutamate 220 acts as the Nucleophile in catalysis.

Belongs to the glycosyl hydrolase 17 family.

The protein localises to the secreted. It is found in the cell wall. It localises to the cytoplasm. The enzyme catalyses Successive hydrolysis of beta-D-glucose units from the non-reducing ends of (1-&gt;3)-beta-D-glucans, releasing alpha-glucose.. Functionally, cell wall glucan 1,3-beta-glucosidase involved in cell wall biosynthesis and virulence. Crucial for delivery of beta-1,3-glucan to the biofilm matrix and for accumulation of mature matrix biomass. This Arthroderma benhamiae (strain ATCC MYA-4681 / CBS 112371) (Trichophyton mentagrophytes) protein is Glucan 1,3-beta-glucosidase ARB_02797.